The following is a 312-amino-acid chain: 2-dehydropantoate 2-reductase (312 aa).

NADP(+) contacts are provided by residues 7-12 (GAGAMG), asparagine 105, and alanine 131. Residue asparagine 105 coordinates substrate. Lysine 187 (proton donor) is an active-site residue. 3 residues coordinate substrate: asparagine 191, asparagine 195, and serine 260. Glutamate 273 is an NADP(+) binding site.

This sequence belongs to the ketopantoate reductase family.

The protein resides in the cytoplasm. It carries out the reaction (R)-pantoate + NADP(+) = 2-dehydropantoate + NADPH + H(+). It functions in the pathway cofactor biosynthesis; (R)-pantothenate biosynthesis; (R)-pantoate from 3-methyl-2-oxobutanoate: step 2/2. Functionally, catalyzes the NADPH-dependent reduction of ketopantoate into pantoic acid. The protein is 2-dehydropantoate 2-reductase of Lactococcus lactis subsp. lactis (strain IL1403) (Streptococcus lactis).